The primary structure comprises 1182 residues: CRISPR-associated endoribonuclease Cas13a (1182 aa).

Residues 132 to 279 adopt a coiled-coil conformation; that stretch reads FNNLIEKVQN…ENNSDNKLKQ (148 aa). Residues 366-508 form an HEPN-like fold 1 region; the sequence is YIKNTGQLET…NNEEIKGYFI (143 aa). The stretch at 896 to 955 forms a coiled coil; that stretch reads KVEKENIEDYNKKEEIEQKKKSNIEKLQDLKVELHKKWEQNKITEKEIEKYNNTTRKINE. Positions 965–1120 are HEPN-like fold 2; it reads LQNVYLLHEM…QNHILKSTKT (156 aa).

This sequence belongs to the CRISPR-associated endoribonuclease Cas13a family. A divalent metal cation serves as cofactor.

With respect to regulation, target RNA acts as an activator for non-specific ssRNA degradation. Its function is as follows. CRISPR (clustered regularly interspaced short palindromic repeat), is an adaptive immune system that provides protection against mobile genetic elements (viruses, transposable elements and conjugative plasmids). CRISPR clusters contain sequences complementary to antecedent mobile elements and target invading nucleic acids. Unlike many single-component effectors, this CRISPR-Cas system targets RNA. CRISPR clusters are transcribed from pre-CRISPR RNA (crRNA) and processed into crRNA by this protein. Cleaves linear target ssRNA in a pre-crRNA-dependent fashion, preferentially before U residues. Binding a viable target RNA target activates this protein for non-specific RNA degradation in vitro (called collateral RNA degradation), which is fairly sensitive as it requires picomolar levels of viable target RNA. The polypeptide is CRISPR-associated endoribonuclease Cas13a (Leptotrichia wadei (strain F0279)).